The following is a 108-amino-acid chain: Ig kappa chain V-V region HP 123E6 (108 aa).

The framework-1 stretch occupies residues 1-23 (DIQMTQSTSSLSASLGDRVTISC). A disulfide bond links C23 and C88. The interval 24–34 (RASQDISNYLN) is complementarity-determining-1. Residues 35 to 49 (WYQQKPDGTVKLLIY) are framework-2. The segment at 50–56 (YTSRLHS) is complementarity-determining-2. The framework-3 stretch occupies residues 57-88 (GVPSRFSGSGSGTDYSLTISNLEQEDIATYFC). The complementarity-determining-3 stretch occupies residues 89 to 97 (QQGYMLPRT). The framework-4 stretch occupies residues 98-108 (FGGGTKLEIKR).

This is Ig kappa chain V-V region HP 123E6 from Mus musculus (Mouse).